A 474-amino-acid polypeptide reads, in one-letter code: Magnesium transporter MRS2-A, chloroplastic (474 aa).

The N-terminal 55 residues, M1–S55, are a transit peptide targeting the chloroplast. A disordered region spans residues G79–G129. Positions D88–E103 are enriched in acidic residues. The span at V104 to A122 shows a compositional bias: basic and acidic residues. Transmembrane regions (helical) follow at residues L412–G432 and W444–M464. The Required for magnesium transport activity motif lies at G432–N434.

It belongs to the CorA metal ion transporter (MIT) (TC 1.A.35.5) family.

Its subcellular location is the plastid. The protein localises to the chloroplast membrane. Magnesium transporter that may mediate the influx of magnesium in chloroplast. This chain is Magnesium transporter MRS2-A, chloroplastic (MRS2-A), found in Oryza sativa subsp. japonica (Rice).